A 138-amino-acid chain; its full sequence is Ribosome-binding factor A (138 aa).

The protein belongs to the RbfA family. In terms of assembly, monomer. Binds 30S ribosomal subunits, but not 50S ribosomal subunits or 70S ribosomes.

The protein localises to the cytoplasm. Functionally, one of several proteins that assist in the late maturation steps of the functional core of the 30S ribosomal subunit. Associates with free 30S ribosomal subunits (but not with 30S subunits that are part of 70S ribosomes or polysomes). Required for efficient processing of 16S rRNA. May interact with the 5'-terminal helix region of 16S rRNA. In Bradyrhizobium sp. (strain ORS 278), this protein is Ribosome-binding factor A.